Here is a 925-residue protein sequence, read N- to C-terminus: Aspulvinone E synthetase melA (925 aa).

The adenylation (A) domain stretch occupies residues 11–434; the sequence is ETAAARNGDG…GGRAKETIII (424 aa). In terms of domain architecture, Carrier spans 564 to 644; sequence SPKNDFEKGL…ELAAALDNLY (81 aa). Ser601 is subject to O-(pantetheine 4'-phosphoryl)serine. The tract at residues 663–923 is thioesterase (TE) domain; the sequence is PLWLVHPGAG…KILRSALAER (261 aa).

Belongs to the ATP-dependent AMP-binding enzyme family.

The protein localises to the cytoplasm. In terms of biological role, nonribosomal peptide synthase; part of the gene cluster that mediates the biosynthesis of Asp-melanin, a pigment that confers resistance against UV light and hampers phagocytosis by soil amoeba. The nonribosomal peptide synthase melA converts 4-hydroxyphenylpyruvate (4-HPPA) to aspulvinone E. The tyrosinase tyrP then performs hydroxylations of both aromatic moieties of aspulvinone E. The product of tyrP is highly unstable, and, due to the high reactivity of methides and ortho-diquinones, the polymeric Asp-melanin forms spontaneously. The protein is Aspulvinone E synthetase melA of Aspergillus terreus.